The primary structure comprises 489 residues: mRNA cleavage and polyadenylation factor CLP1 (489 aa).

Residues Glu28 and 152–157 each bind ATP; that span reads YSGKTT.

The protein belongs to the Clp1 family. Clp1 subfamily. Component of a pre-mRNA cleavage factor complex. Interacts directly with PCF11.

The protein localises to the nucleus. Required for endonucleolytic cleavage during polyadenylation-dependent pre-mRNA 3'-end formation. The chain is mRNA cleavage and polyadenylation factor CLP1 from Candida albicans (strain SC5314 / ATCC MYA-2876) (Yeast).